Here is a 589-residue protein sequence, read N- to C-terminus: WD repeat-containing protein 26 homolog (589 aa).

Residues 1–57 are disordered; sequence MGVVEDTEPPLKRAKRLADEPNGFSANSSVRGSSVNSNSLGDLMARPLPSQGDDETI. A compositionally biased stretch (low complexity) spans 25-39; the sequence is SANSSVRGSSVNSNS. The LisH domain occupies 64–96; the sequence is RKSEFVRIITRALYSLGYDKTGAMLEEESGISL. Residues 97 to 154 enclose the CTLH domain; the sequence is HNSTIKLFLQQVKDGKWDQSVKTLHRIGFPDEKAVKAASFLLLEQKFLEFLKVEKIAD. WD repeat units follow at residues 272–311, 317–358, 360–398, 401–440, 442–480, 484–526, and 529–569; these read SHTD…HISL, GHHK…HMYE, GGIS…KECW, QRTQ…ERLI, EEDM…KIVS, GHKR…LIVE, and GHAG…QQNQ.

Interacts with RANBPM. As to expression, expressed in roots, leaves and flowers.

Its subcellular location is the cytoplasm. Acts as a component involved in the crosstalk regulation between light, hormone and abiotic stress response. The protein is WD repeat-containing protein 26 homolog of Arabidopsis thaliana (Mouse-ear cress).